Reading from the N-terminus, the 100-residue chain is Large ribosomal subunit protein uL23 (100 aa).

The protein belongs to the universal ribosomal protein uL23 family. As to quaternary structure, part of the 50S ribosomal subunit. Contacts protein L29, and trigger factor when it is bound to the ribosome.

One of the early assembly proteins it binds 23S rRNA. One of the proteins that surrounds the polypeptide exit tunnel on the outside of the ribosome. Forms the main docking site for trigger factor binding to the ribosome. This is Large ribosomal subunit protein uL23 from Shewanella frigidimarina (strain NCIMB 400).